A 68-amino-acid polypeptide reads, in one-letter code: Figainin 1 (68 aa).

Residues 1-22 (MAFLKKSLFLVLFLGLVSLSIG) form the signal peptide. A disordered region spans residues 23–45 (EEEKREEEEKNEEGANQEENAEN). The propeptide occupies 23-47 (EEEKREEEEKNEEGANQEENAENKE). Acidic residues predominate over residues 26–42 (KREEEEKNEEGANQEEN). Lys-67 carries the lysine amide modification.

As to expression, expressed by the skin glands.

The protein localises to the secreted. Antimicrobial peptide that displays antibacterial and antiprotozoal activity. Exhibits antibacterial activity against the Gram-positive bacteria S.epidermidis ATCC 12228 (MIC=2 uM), E.casseliflavus ATCC 700327 (MIC=16 uM), S.aureus ATCC 25923 (MIC=4 uM) and E.faecalis ATCC 29212 (MIC=8 uM), and the Gram-negative bacteria E.coli ATCC 25922 (MIC=16 uM) and K.pneumoniae ATCC 13883 (MIC=4 uM). Displays antiprotozoal activity against the epimastigote form of T.cruzi (IC(50)=15.9 uM). Does not show antimicrobial activity against the Gram-negative bacterium P.aeruginosa ATCC 27853, or the fungi C.albicans ATCC 90028 and C.parapsilosis ATCC 22019. Shows high cytolytic activity against human erythrocytes (HC(50)=10 uM), and displays anti-proliferative effects against various cancer cell lines including MCF-7 breast cancer cells (IC(50)=13.7 uM), HeLa cervical adenocarcinoma cells (IC(50)=11.1 uM) and B16F10 murine melanoma cells (IC(50)=10.5 uM). The sequence is that of Figainin 1 from Boana raniceps (Chaco tree frog).